Here is a 425-residue protein sequence, read N- to C-terminus: Enolase (425 aa).

Gln163 serves as a coordination point for (2R)-2-phosphoglycerate. Catalysis depends on Glu205, which acts as the Proton donor. Positions 242, 286, and 313 each coordinate Mg(2+). Residues Lys338, Arg367, Ser368, and Lys389 each contribute to the (2R)-2-phosphoglycerate site. The active-site Proton acceptor is Lys338.

The protein belongs to the enolase family. Requires Mg(2+) as cofactor.

It is found in the cytoplasm. The protein resides in the secreted. Its subcellular location is the cell surface. It carries out the reaction (2R)-2-phosphoglycerate = phosphoenolpyruvate + H2O. Its pathway is carbohydrate degradation; glycolysis; pyruvate from D-glyceraldehyde 3-phosphate: step 4/5. Functionally, catalyzes the reversible conversion of 2-phosphoglycerate (2-PG) into phosphoenolpyruvate (PEP). It is essential for the degradation of carbohydrates via glycolysis. The sequence is that of Enolase from Lactobacillus delbrueckii subsp. bulgaricus (strain ATCC 11842 / DSM 20081 / BCRC 10696 / JCM 1002 / NBRC 13953 / NCIMB 11778 / NCTC 12712 / WDCM 00102 / Lb 14).